A 645-amino-acid polypeptide reads, in one-letter code: Beta-galactosidase BgaA (645 aa).

A substrate-binding site is contributed by Arg102. Cys106 contacts Zn(2+). Position 140 (Asn140) interacts with substrate. The active-site Proton donor is Glu141. 3 residues coordinate Zn(2+): Cys150, Cys152, and Cys155. Glu312 functions as the Nucleophile in the catalytic mechanism. Residues Trp320 and 360–363 (EQMH) each bind substrate.

Belongs to the glycosyl hydrolase 42 family.

The catalysed reaction is Hydrolysis of terminal non-reducing beta-D-galactose residues in beta-D-galactosides.. In terms of biological role, hydrolyzes chromogen 5-bromo-4-chloro-3-indolyl-beta-D-galactopyranoside (X-Gal) and p-nitrophenyl-beta-D-galactoside (pNPGal). The polypeptide is Beta-galactosidase BgaA (Thermus sp).